The chain runs to 239 residues: Pentatricopeptide repeat-containing protein DWY1, chloroplastic (239 aa).

The N-terminal 35 residues, 1–35 (MALEAAFSMSFCSFSVPKAIFCERETSSFQRITSR), are a transit peptide targeting the chloroplast. 2 disordered regions span residues 40 to 59 (AGESQVQSSDGVETQVKETS) and 101 to 122 (HISPSSHSTKVRGDKPEISGGE). Basic and acidic residues predominate over residues 111 to 122 (VRGDKPEISGGE). A type E(+) motif region spans residues 113 to 144 (GDKPEISGGEKKAIVDRSKAYVKLKSLGKEVR). Positions 145 to 239 (DAGYVPETKY…DGNCSCGDYW (95 aa)) are type DYW motif.

The protein belongs to the PPR family. PCMP-H subfamily. Interacts with CRR4. Zn(2+) is required as a cofactor.

It is found in the plastid. The protein resides in the chloroplast. In terms of biological role, plays a major role in single RNA editing events in chloroplasts. Acts as a site-recognition transacting factor involved in the edition of the site 1 of ndhD (ndhD-1 site corresponding to cytidine-2), which is a plastid-encoded subunit of the NADH-plastoquinone oxidoreductase. The interaction with CRR4 is required for its function in editing the ndhD-1 site. The chain is Pentatricopeptide repeat-containing protein DWY1, chloroplastic from Arabidopsis thaliana (Mouse-ear cress).